A 120-amino-acid polypeptide reads, in one-letter code: Large ribosomal subunit protein uL22 (120 aa).

The tract at residues 1–22 (MLVNRRYTAKGKNLPSSPKKVR) is disordered.

It belongs to the universal ribosomal protein uL22 family. Part of the 50S ribosomal subunit.

Its function is as follows. This protein binds specifically to 23S rRNA; its binding is stimulated by other ribosomal proteins, e.g. L4, L17, and L20. It is important during the early stages of 50S assembly. It makes multiple contacts with different domains of the 23S rRNA in the assembled 50S subunit and ribosome. Functionally, the globular domain of the protein is located near the polypeptide exit tunnel on the outside of the subunit, while an extended beta-hairpin is found that lines the wall of the exit tunnel in the center of the 70S ribosome. This is Large ribosomal subunit protein uL22 from Borreliella burgdorferi (strain ATCC 35210 / DSM 4680 / CIP 102532 / B31) (Borrelia burgdorferi).